Here is a 328-residue protein sequence, read N- to C-terminus: PDZ and LIM domain protein 1 (328 aa).

Threonine 2 carries the N-acetylthreonine modification. The 83-residue stretch at 3 to 85 (TLQIVLQGPG…NMTLTVARSE (83 aa)) folds into the PDZ domain. Phosphoserine is present on residues serine 90 and serine 130. Residue tyrosine 144 is modified to Phosphotyrosine. Residues 257-316 (PMCDKCGTGIVGVFVKLRERHRHPECYVCTDCGTNLKQKGHFFVEDQIYCEKHARERVTP) form the LIM zinc-binding domain. Zn(2+) contacts are provided by cysteine 259, cysteine 262, histidine 279, cysteine 282, cysteine 285, cysteine 288, cysteine 306, and histidine 309. Phosphothreonine is present on threonine 315. At tyrosine 320 the chain carries Phosphotyrosine.

In terms of assembly, interacts with ACTN1, ACTN2 and ACTN4. Interacts with PDLIM4.

The protein localises to the cytoplasm. It localises to the cytoskeleton. It is found in the myofibril. The protein resides in the sarcomere. Its subcellular location is the z line. In terms of biological role, cytoskeletal protein that may act as an adapter that brings other proteins (like kinases) to the cytoskeleton. Involved in assembly, disassembly and directioning of stress fibers in fibroblasts. Required for the localization of ACTN1 and PALLD to stress fibers. Required for cell migration and in maintaining cell polarity of fibroblasts. This is PDZ and LIM domain protein 1 (PDLIM1) from Bos taurus (Bovine).